A 633-amino-acid polypeptide reads, in one-letter code: Threonine--tRNA ligase (633 aa).

Positions 1 to 143 (MRALFLHSNR…SRTIKPKKVK (143 aa)) are editing domain. 2 catalytic regions span residues 220–515 (NPLN…PVLP) and 221–515 (PLND…PVLP). Positions 314, 365, and 488 each coordinate Zn(2+).

The protein belongs to the class-II aminoacyl-tRNA synthetase family. In terms of assembly, homodimer. Requires Zn(2+) as cofactor.

Its subcellular location is the cytoplasm. The catalysed reaction is tRNA(Thr) + L-threonine + ATP = L-threonyl-tRNA(Thr) + AMP + diphosphate + H(+). Its function is as follows. Catalyzes the attachment of threonine to tRNA(Thr) in a two-step reaction: L-threonine is first activated by ATP to form Thr-AMP and then transferred to the acceptor end of tRNA(Thr). Also edits incorrectly charged L-seryl-tRNA(Thr). In Nanoarchaeum equitans (strain Kin4-M), this protein is Threonine--tRNA ligase.